A 129-amino-acid polypeptide reads, in one-letter code: Glycine cleavage system H protein (129 aa).

In terms of domain architecture, Lipoyl-binding spans 24 to 106; that stretch reads LVRVGLSAYA…HGEGWLLVIR (83 aa). Lysine 65 carries the N6-lipoyllysine modification.

This sequence belongs to the GcvH family. The glycine cleavage system is composed of four proteins: P, T, L and H. Requires (R)-lipoate as cofactor.

Functionally, the glycine cleavage system catalyzes the degradation of glycine. The H protein shuttles the methylamine group of glycine from the P protein to the T protein. The chain is Glycine cleavage system H protein from Synechococcus sp. (strain CC9311).